We begin with the raw amino-acid sequence, 162 residues long: uncharacterized protein (162 aa).

Belongs to the baculoviridae 19 kDa protein family.

This is an uncharacterized protein from Tortricidae (ClGV).